A 265-amino-acid chain; its full sequence is Ribonuclease 3 (265 aa).

The 124-residue stretch at 34–157 folds into the RNase III domain; sequence LAVLTRKLGY…LIGAIYLDSQ (124 aa). Position 70 (glutamate 70) interacts with Mg(2+). Aspartate 74 is an active-site residue. Mg(2+) contacts are provided by aspartate 143 and glutamate 146. Glutamate 146 is a catalytic residue. A DRBM domain is found at 185–256; it reads DAKSRLQEWL…AELMINQLHK (72 aa).

It belongs to the ribonuclease III family. Homodimer. Requires Mg(2+) as cofactor.

The protein localises to the cytoplasm. The catalysed reaction is Endonucleolytic cleavage to 5'-phosphomonoester.. Digests double-stranded RNA. Involved in the processing of primary rRNA transcript to yield the immediate precursors to the large and small rRNAs (23S and 16S). Processes some mRNAs, and tRNAs when they are encoded in the rRNA operon. Processes pre-crRNA and tracrRNA of type II CRISPR loci if present in the organism. This is Ribonuclease 3 from Psychrobacter arcticus (strain DSM 17307 / VKM B-2377 / 273-4).